The following is a 401-amino-acid chain: tRNA N6-adenosine threonylcarbamoyltransferase (401 aa).

2 residues coordinate Fe cation: histidine 111 and histidine 115. Substrate is bound by residues 191 to 195 (LASGG), aspartate 223, glycine 236, and asparagine 336. Aspartate 364 contacts Fe cation.

Belongs to the KAE1 / TsaD family. Fe(2+) is required as a cofactor.

The protein localises to the cytoplasm. It carries out the reaction L-threonylcarbamoyladenylate + adenosine(37) in tRNA = N(6)-L-threonylcarbamoyladenosine(37) in tRNA + AMP + H(+). Required for the formation of a threonylcarbamoyl group on adenosine at position 37 (t(6)A37) in tRNAs that read codons beginning with adenine. Is involved in the transfer of the threonylcarbamoyl moiety of threonylcarbamoyl-AMP (TC-AMP) to the N6 group of A37, together with TsaE and TsaB. TsaD likely plays a direct catalytic role in this reaction. The chain is tRNA N6-adenosine threonylcarbamoyltransferase from Tropheryma whipplei (strain TW08/27) (Whipple's bacillus).